Consider the following 303-residue polypeptide: Tobamovirus multiplication protein 3 (303 aa).

At 1 to 48 (MRIGGVEVTKFASEMMSSSSSSAVEMLNLKEASNWWSDVNESPIWQDR) the chain is on the extracellular side. A helical transmembrane segment spans residues 49–69 (IFHVLAVLYGIVSLVAVIQLV). Over 70–82 (RIQLRVPEYGWTT) the chain is Cytoplasmic. A helical transmembrane segment spans residues 83–103 (QKVFHFLNFVVNGVRAVVFVF). Residues 104–117 (RRNVQFMQPEILQH) are Extracellular-facing. A helical transmembrane segment spans residues 118-138 (ILLDIPSLAFFTTYALLVLFW). Over 139 to 156 (AEIYYQARAVSTDGLRPS) the chain is Cytoplasmic. A helical membrane pass occupies residues 157-177 (FFTINAVVYVVQIALWLVLWW). The Extracellular portion of the chain corresponds to 178–183 (KPVRVM). A helical transmembrane segment spans residues 184–204 (VILSKMFFAGVSLFAALGFLL). Residues 205 to 232 (YGGRLFLMLQRFPVESKGRRKKLQEVGY) lie on the Cytoplasmic side of the membrane. A helical transmembrane segment spans residues 233 to 253 (VTTICFTCFLIRCIMMCFAAF). The Extracellular portion of the chain corresponds to 254 to 265 (DEGANLDVLDHP). The chain crosses the membrane as a helical span at residues 266 to 286 (ILNFIYYLLVEILPSSLVLFI). Residues 287 to 303 (LRKLPPKRGITQYHQIR) are Cytoplasmic-facing.

Belongs to the plant tobamovirus multiplication TOM1 protein family. As to quaternary structure, constituent of tobamovirus replication complex. Interacts with the helicase domain of tobamovirus-encoded replication proteins.

It localises to the vacuole membrane. Functionally, contributes to the intracellular multiplication of tobamoviruses, probably being a membrane anchor promoting the formation of the replication complex. This is Tobamovirus multiplication protein 3 (TOM3) from Arabidopsis thaliana (Mouse-ear cress).